A 70-amino-acid chain; its full sequence is uncharacterized protein (70 aa).

This is an uncharacterized protein from Rickettsia conorii (strain ATCC VR-613 / Malish 7).